A 377-amino-acid chain; its full sequence is Glutamate 5-kinase (377 aa).

Position 20 (Lys-20) interacts with ATP. Residues Ser-60, Asp-147, and Asn-159 each contribute to the substrate site. Ser-179 to Asp-180 contributes to the ATP binding site. Positions His-281–Phe-355 constitute a PUA domain.

This sequence belongs to the glutamate 5-kinase family.

The protein localises to the cytoplasm. It carries out the reaction L-glutamate + ATP = L-glutamyl 5-phosphate + ADP. The protein operates within amino-acid biosynthesis; L-proline biosynthesis; L-glutamate 5-semialdehyde from L-glutamate: step 1/2. Its function is as follows. Catalyzes the transfer of a phosphate group to glutamate to form L-glutamate 5-phosphate. This Corynebacterium jeikeium (strain K411) protein is Glutamate 5-kinase.